The chain runs to 20 residues: U1-poneritoxin-Ni1a (20 aa).

Position 20 is a lysine amide (Lys-20).

It belongs to the non-disulfide-bridged peptide (NDBP) superfamily. Medium-length antimicrobial peptide (group 3) family. Ponericin-W subfamily. In terms of tissue distribution, expressed by the venom gland.

The protein localises to the secreted. It localises to the target cell membrane. Has activity against Gram-positive bacteria. Has insecticidal and hemolytic activities. May act by disrupting the integrity of the bacterial cell membrane. This chain is U1-poneritoxin-Ni1a, found in Neoponera inversa (Ant).